Consider the following 37-residue polypeptide: Large ribosomal subunit protein bL36c (37 aa).

This sequence belongs to the bacterial ribosomal protein bL36 family.

It localises to the plastid. In Euglena longa (Euglenophycean alga), this protein is Large ribosomal subunit protein bL36c (rpl36).